The chain runs to 245 residues: Putative binding protein HI_1525 (245 aa).

Positions 1–19 are cleaved as a signal peptide; sequence MKKLVAVTSMILTTFSVQA. Ser56 and Val163 together coordinate molybdate.

The protein belongs to the bacterial solute-binding protein ModA family.

The protein resides in the periplasm. Probably involved in the binding-dependent system. The polypeptide is Putative binding protein HI_1525 (Haemophilus influenzae (strain ATCC 51907 / DSM 11121 / KW20 / Rd)).